Reading from the N-terminus, the 169-residue chain is Putative phosphoesterase SSP1770 (169 aa).

Catalysis depends on His-34, which acts as the Proton donor. Short sequence motifs (HXTX) lie at residues His-34–Ile-37 and His-115–Ile-118. The Proton acceptor role is filled by His-115.

Belongs to the 2H phosphoesterase superfamily. YjcG family.

This chain is Putative phosphoesterase SSP1770, found in Staphylococcus saprophyticus subsp. saprophyticus (strain ATCC 15305 / DSM 20229 / NCIMB 8711 / NCTC 7292 / S-41).